We begin with the raw amino-acid sequence, 200 residues long: Imidazoleglycerol-phosphate dehydratase (200 aa).

It belongs to the imidazoleglycerol-phosphate dehydratase family.

The protein resides in the cytoplasm. The catalysed reaction is D-erythro-1-(imidazol-4-yl)glycerol 3-phosphate = 3-(imidazol-4-yl)-2-oxopropyl phosphate + H2O. The protein operates within amino-acid biosynthesis; L-histidine biosynthesis; L-histidine from 5-phospho-alpha-D-ribose 1-diphosphate: step 6/9. This chain is Imidazoleglycerol-phosphate dehydratase, found in Bifidobacterium animalis subsp. lactis (strain AD011).